Reading from the N-terminus, the 152-residue chain is D-aminoacyl-tRNA deacylase (152 aa).

The short motif at 142 to 143 is the Gly-cisPro motif, important for rejection of L-amino acids element; that stretch reads GP.

This sequence belongs to the DTD family. In terms of assembly, homodimer.

Its subcellular location is the cytoplasm. It carries out the reaction glycyl-tRNA(Ala) + H2O = tRNA(Ala) + glycine + H(+). The enzyme catalyses a D-aminoacyl-tRNA + H2O = a tRNA + a D-alpha-amino acid + H(+). Its function is as follows. An aminoacyl-tRNA editing enzyme that deacylates mischarged D-aminoacyl-tRNAs. Also deacylates mischarged glycyl-tRNA(Ala), protecting cells against glycine mischarging by AlaRS. Acts via tRNA-based rather than protein-based catalysis; rejects L-amino acids rather than detecting D-amino acids in the active site. By recycling D-aminoacyl-tRNA to D-amino acids and free tRNA molecules, this enzyme counteracts the toxicity associated with the formation of D-aminoacyl-tRNA entities in vivo and helps enforce protein L-homochirality. The polypeptide is D-aminoacyl-tRNA deacylase (Burkholderia mallei (strain NCTC 10247)).